A 214-amino-acid polypeptide reads, in one-letter code: 3,4-dihydroxy-2-butanone 4-phosphate synthase (214 aa).

D-ribulose 5-phosphate is bound by residues Arg-37 to Glu-38, Asp-42, Arg-150 to Thr-154, and Glu-174. Mg(2+) is bound at residue Glu-38. His-153 contacts Mg(2+).

It belongs to the DHBP synthase family. As to quaternary structure, homodimer. Mg(2+) serves as cofactor. Mn(2+) is required as a cofactor.

It carries out the reaction D-ribulose 5-phosphate = (2S)-2-hydroxy-3-oxobutyl phosphate + formate + H(+). It participates in cofactor biosynthesis; riboflavin biosynthesis; 2-hydroxy-3-oxobutyl phosphate from D-ribulose 5-phosphate: step 1/1. Catalyzes the conversion of D-ribulose 5-phosphate to formate and 3,4-dihydroxy-2-butanone 4-phosphate. This is 3,4-dihydroxy-2-butanone 4-phosphate synthase from Nitratidesulfovibrio vulgaris (strain ATCC 29579 / DSM 644 / CCUG 34227 / NCIMB 8303 / VKM B-1760 / Hildenborough) (Desulfovibrio vulgaris).